The primary structure comprises 302 residues: DNA-binding transcriptional activator HetR (302 aa).

Serine 153 is an active-site residue.

This sequence belongs to the peptidase S48 family. Homodimer; disulfide-linked.

Functionally, might be involved in temporal and/or spatial regulation of nitrogen fixation. Dimerization is required for DNA-binding. Has both a protease and a DNA-binding activity. The protein is DNA-binding transcriptional activator HetR of Trichodesmium erythraeum (strain IMS101).